The chain runs to 783 residues: ATP-dependent DNA helicase Hel308 (783 aa).

ATP is bound by residues Gln29 and 47–54 (VPTASGKT). The Helicase ATP-binding domain occupies 34–209 (ERGVTEGANL…WLDAELVDSD (176 aa)). A DEAH box motif is present at residues 154-157 (DEVH). The Helicase C-terminal domain occupies 242–443 (QTAAVVADTL…EPALRTHVLA (202 aa)). Residues 744-783 (ETVGHPDPGMDGVAADTDAAPESGGEAGGDEGQASLGDFS) are disordered.

Belongs to the helicase family. Hel308 subfamily. In terms of assembly, monomer.

The enzyme catalyses Couples ATP hydrolysis with the unwinding of duplex DNA by translocating in the 3'-5' direction.. The catalysed reaction is ATP + H2O = ADP + phosphate + H(+). Functionally, DNA-dependent ATPase and 3'-5' DNA helicase that may be involved in repair of stalled replication forks. This is ATP-dependent DNA helicase Hel308 from Halobacterium salinarum (strain ATCC 700922 / JCM 11081 / NRC-1) (Halobacterium halobium).